Reading from the N-terminus, the 294-residue chain is Glycine--tRNA ligase alpha subunit (294 aa).

The protein belongs to the class-II aminoacyl-tRNA synthetase family. In terms of assembly, tetramer of two alpha and two beta subunits.

Its subcellular location is the cytoplasm. It catalyses the reaction tRNA(Gly) + glycine + ATP = glycyl-tRNA(Gly) + AMP + diphosphate. This chain is Glycine--tRNA ligase alpha subunit, found in Polynucleobacter asymbioticus (strain DSM 18221 / CIP 109841 / QLW-P1DMWA-1) (Polynucleobacter necessarius subsp. asymbioticus).